The chain runs to 698 residues: Elongation factor G (698 aa).

The tr-type G domain occupies 8-290 (ERYRNIGISA…AVIELLPSPT (283 aa)). GTP-binding positions include 17 to 24 (AHIDAGKT), 88 to 92 (DTPGH), and 142 to 145 (NKMD).

The protein belongs to the TRAFAC class translation factor GTPase superfamily. Classic translation factor GTPase family. EF-G/EF-2 subfamily.

The protein resides in the cytoplasm. Functionally, catalyzes the GTP-dependent ribosomal translocation step during translation elongation. During this step, the ribosome changes from the pre-translocational (PRE) to the post-translocational (POST) state as the newly formed A-site-bound peptidyl-tRNA and P-site-bound deacylated tRNA move to the P and E sites, respectively. Catalyzes the coordinated movement of the two tRNA molecules, the mRNA and conformational changes in the ribosome. This is Elongation factor G from Chromobacterium violaceum (strain ATCC 12472 / DSM 30191 / JCM 1249 / CCUG 213 / NBRC 12614 / NCIMB 9131 / NCTC 9757 / MK).